Consider the following 954-residue polypeptide: Lysine-specific demethylase JMJ14 (954 aa).

The tract at residues 1–46 is disordered; the sequence is MDQLASLAESVAMEEDSEKQSIKGESSLEPDSTPSSPKITARWNPS. Residues 29–38 show a composition bias toward polar residues; the sequence is EPDSTPSSPK. Positions 56-97 constitute a JmjN domain; it reads APIFYPTNEDFDDPLGYIEKLRSKAESYGICRIVPPVAWRPP. Positions 136–143 match the Nuclear localization signal 1 motif; that stretch reads RKRRRISK. The segment at 148-170 is disordered; it reads RRKRDSGCDTASSGSSDSEGKFG. One can recognise a JmjC domain in the interval 263–429; that stretch reads QYSQCGWNLN…HGQNAVEGYS (167 aa). The Fe cation site is built by histidine 309, glutamate 311, and histidine 397. The short motif at 470-477 is the Nuclear localization signal 2 element; the sequence is WKRVCSED. Residues cysteine 519, cysteine 522, cysteine 533, cysteine 535, cysteine 542, histidine 545, cysteine 550, and cysteine 552 each contribute to the Zn(2+) site. A C5HC2 zinc finger spans residues 519–571; that stretch reads CFLCFYDLHMSASSCKCSPNRFACLIHAKDLCSCESKDRYILIRHTLDELWAL. The tract at residues 641 to 670 is disordered; it reads SNKEVQLKQDGDSDVNRHGHESERNHVHGI. Residues 645–670 are compositionally biased toward basic and acidic residues; sequence VQLKQDGDSDVNRHGHESERNHVHGI. The FYR N-terminal domain occupies 726–784; that stretch reads ATNRLSLSVELLSSGSLVVKKLWCSKQAIYPKGFKSRVKFLSVLDPTNLTNYISEVLDA. An FYR C-terminal domain is found at 786-876; it reads LLGPLFRVSV…HQLEEYWNQK (91 aa). A disordered region spans residues 884-905; that stretch reads EPIKEGEKDDTEKGGASDPSLD. The segment covering 885–905 has biased composition (basic and acidic residues); sequence PIKEGEKDDTEKGGASDPSLD.

It belongs to the JARID1 histone demethylase family. In terms of assembly, interacts with NAC050 and NAC051/NAC052. Interacts with THAL in the nucleus. The cofactor is Fe(2+). In terms of tissue distribution, expressed in shoot apex, primary root tip, trichomes of young leaves, leaf vascular tissues, anther filaments and styles. Detected in inflorescences, leaves, stems, roots and siliques. Mostly expressed in floral organs, and, at low levels, in other organs.

The protein localises to the nucleus. It is found in the nucleoplasm. The enzyme catalyses N(6),N(6),N(6)-trimethyl-L-lysyl(4)-[histone H3] + 2-oxoglutarate + O2 = N(6),N(6)-dimethyl-L-lysyl(4)-[histone H3] + formaldehyde + succinate + CO2. The catalysed reaction is N(6),N(6)-dimethyl-L-lysyl(4)-[histone H3] + 2-oxoglutarate + O2 = N(6)-methyl-L-lysyl(4)-[histone H3] + formaldehyde + succinate + CO2. It carries out the reaction N(6)-methyl-L-lysyl(4)-[histone H3] + 2-oxoglutarate + O2 = L-lysyl(4)-[histone H3] + formaldehyde + succinate + CO2. It catalyses the reaction N(6),N(6),N(6)-trimethyl-L-lysyl(4)-[histone H3] + 3 2-oxoglutarate + 3 O2 = L-lysyl(4)-[histone H3] + 3 formaldehyde + 3 succinate + 3 CO2. Functionally, transcriptional repressor. Histone demethylase that demethylates 'Lys-4' (H3K4me) of histone H3 with a higher activity for H3K4me3 and H3K4me2 than H3K4me1. No activity on H3K9me3/2, H3K36me3/2 and H3K27me3/2. Function as a nocturne 'eraser' to counteract the diurnal 'writer' methylase activity of ATXR3/SDG2 thus orchestrating the circadian rhythm of histone modifications (e.g. H3K4me3) and modulating the rhythmic expression of diurnal target genes; this mechanism also relies on the circadian clock oscillators CCA1 and LHY. Involved in a negative regulation of root meristem growth upon suboptimal root growth conditions. Represses FT and TSF expression to inhibit the floral transition. Binds around the transcription start site of the FT locus. Involved in the DRM2-mediated maintenance of DNA methylation, but not required for the de novo DNA methylation. Required for demethylating histone H3K4me3 at the target of RNA silencing. Counteracts the DNA methylation of expressed transgenes; specific attenuation of transgene DNA methylation enhances the production of aberrant RNAs (e.g. uncapped and antisense) that readily induce systemic RDR6-dependent post-transcriptional transgene silencing (PTGS) spreading. Together with NAC051/NAC052 and NAC050, regulates gene expression and flowering time, probably by the promotion of RNA-mediated gene silencing. Together with JMJ16 and JMJ17, required for plant growth and development. Promotes local and systemic immunity (especially toward the bacterial pathogen Pseudomonas syringae Pst DC3000 avrRpt2) by regulating positively pathogen-induced H3K4me3 enrichment and expression of defense genes involved in salicylic acid (SA)- and pipecolic acid (Pip)-mediated defense pathways (e.g. PR1, FMO1, ALD1 and SARD4). This Arabidopsis thaliana (Mouse-ear cress) protein is Lysine-specific demethylase JMJ14.